A 1081-amino-acid polypeptide reads, in one-letter code: Carbamoyl phosphate synthase large chain (1081 aa).

Residues 1 to 410 form a carboxyphosphate synthetic domain region; sequence MPKRTDIKTI…SFQKALRGLE (410 aa). ATP is bound by residues Arg-129, Arg-176, Gly-182, Gly-183, Glu-215, Leu-217, Glu-222, Gly-248, Ile-249, His-250, Gln-292, and Glu-306. Positions 133–335 constitute an ATP-grasp 1 domain; the sequence is KEAMTKIGLG…IAKVAAKLAV (203 aa). Residues Gln-292, Glu-306, and Asn-308 each contribute to the Mg(2+) site. Mn(2+) is bound by residues Gln-292, Glu-306, and Asn-308. The interval 411-558 is oligomerization domain; the sequence is VGVDGLDEKS…YEAEHGECEA (148 aa). The interval 559–944 is carbamoyl phosphate synthetic domain; that stretch reads DPTERKKIMV…ALFKSQLAAG (386 aa). In terms of domain architecture, ATP-grasp 2 spans 683–878; the sequence is QKLLHDLGLR…LAKVAARCMA (196 aa). Residues Arg-719, Arg-758, Leu-760, Glu-765, Gly-790, Val-791, His-792, Ser-793, Gln-833, and Glu-849 each contribute to the ATP site. Mg(2+) contacts are provided by Gln-833, Glu-849, and Asn-851. Residues Gln-833, Glu-849, and Asn-851 each coordinate Mn(2+). An MGS-like domain is found at 945-1081; it reads SRLPEKGTVL…YDLQGLHASL (137 aa). The segment at 945–1081 is allosteric domain; that stretch reads SRLPEKGTVL…YDLQGLHASL (137 aa).

This sequence belongs to the CarB family. Composed of two chains; the small (or glutamine) chain promotes the hydrolysis of glutamine to ammonia, which is used by the large (or ammonia) chain to synthesize carbamoyl phosphate. Tetramer of heterodimers (alpha,beta)4. The cofactor is Mg(2+). Mn(2+) is required as a cofactor.

It carries out the reaction hydrogencarbonate + L-glutamine + 2 ATP + H2O = carbamoyl phosphate + L-glutamate + 2 ADP + phosphate + 2 H(+). The enzyme catalyses hydrogencarbonate + NH4(+) + 2 ATP = carbamoyl phosphate + 2 ADP + phosphate + 2 H(+). The protein operates within amino-acid biosynthesis; L-arginine biosynthesis; carbamoyl phosphate from bicarbonate: step 1/1. It participates in pyrimidine metabolism; UMP biosynthesis via de novo pathway; (S)-dihydroorotate from bicarbonate: step 1/3. Its function is as follows. Large subunit of the glutamine-dependent carbamoyl phosphate synthetase (CPSase). CPSase catalyzes the formation of carbamoyl phosphate from the ammonia moiety of glutamine, carbonate, and phosphate donated by ATP, constituting the first step of 2 biosynthetic pathways, one leading to arginine and/or urea and the other to pyrimidine nucleotides. The large subunit (synthetase) binds the substrates ammonia (free or transferred from glutamine from the small subunit), hydrogencarbonate and ATP and carries out an ATP-coupled ligase reaction, activating hydrogencarbonate by forming carboxy phosphate which reacts with ammonia to form carbamoyl phosphate. The chain is Carbamoyl phosphate synthase large chain from Ralstonia nicotianae (strain ATCC BAA-1114 / GMI1000) (Ralstonia solanacearum).